The sequence spans 107 residues: Phosphoribosyl-ATP pyrophosphatase (107 aa).

It belongs to the PRA-PH family.

The protein localises to the cytoplasm. It carries out the reaction 1-(5-phospho-beta-D-ribosyl)-ATP + H2O = 1-(5-phospho-beta-D-ribosyl)-5'-AMP + diphosphate + H(+). Its pathway is amino-acid biosynthesis; L-histidine biosynthesis; L-histidine from 5-phospho-alpha-D-ribose 1-diphosphate: step 2/9. This chain is Phosphoribosyl-ATP pyrophosphatase, found in Rhizobium etli (strain CIAT 652).